Consider the following 397-residue polypeptide: Enoyl-[acyl-carrier-protein] reductase [NADH] (397 aa).

Residues 48–53 (GASTGY), 74–75 (FE), 111–112 (DA), and 139–140 (VA) each bind NAD(+). A substrate-binding site is contributed by Y225. Y235 functions as the Proton donor in the catalytic mechanism. Residues K244 and 273 to 275 (VVT) contribute to the NAD(+) site.

Belongs to the TER reductase family. As to quaternary structure, monomer.

The enzyme catalyses a 2,3-saturated acyl-[ACP] + NAD(+) = a (2E)-enoyl-[ACP] + NADH + H(+). The protein operates within lipid metabolism; fatty acid biosynthesis. Its function is as follows. Involved in the final reduction of the elongation cycle of fatty acid synthesis (FAS II). Catalyzes the reduction of a carbon-carbon double bond in an enoyl moiety that is covalently linked to an acyl carrier protein (ACP). In Burkholderia pseudomallei (strain K96243), this protein is Enoyl-[acyl-carrier-protein] reductase [NADH].